Reading from the N-terminus, the 82-residue chain is Cytochrome c oxidase-assembly factor cox-23, mitochondrial (82 aa).

The interval 1-27 is disordered; the sequence is MAQAGSENKEPWNEETRAKFEGKSRSE. Residues 7–27 show a composition bias toward basic and acidic residues; the sequence is ENKEPWNEETRAKFEGKSRSE. The CHCH domain occupies 29–71; that stretch reads LDPCQEAAQRSIRCLHRNQGDRTMCSDYFEAYRECKKQWIERR. 2 consecutive short sequence motifs (cx9C motif) follow at residues 32–42 and 53–63; these read CQEAAQRSIRC and CSDYFEAYREC. 2 disulfides stabilise this stretch: cysteine 32-cysteine 63 and cysteine 42-cysteine 53.

This sequence belongs to the COX23 family.

The protein resides in the mitochondrion intermembrane space. Functionally, required for the assembly of cytochrome c oxidase. This chain is Cytochrome c oxidase-assembly factor cox-23, mitochondrial (cox-23), found in Neurospora crassa (strain ATCC 24698 / 74-OR23-1A / CBS 708.71 / DSM 1257 / FGSC 987).